The chain runs to 213 residues: Histone H1 (213 aa).

The span at 1 to 25 (MAAATASAAATPAKKAAPKKPAAAP) shows a compositional bias: low complexity. Disordered stretches follow at residues 1 to 30 (MAAATASAAATPAKKAAPKKPAAAPEHPSY) and 81 to 213 (GEFV…AKSS). The H15 domain maps to 26 to 97 (EHPSYKEMLT…GPSGTVKLAK (72 aa)). Composition is skewed to low complexity over residues 102–113 (AAAPKKPAAKKA), 123–137 (KKAAAPKKAAAPKSA), 157–176 (KKAAAPKKVAAPVEKPAPVK), and 203–213 (PKKAATPAKSS).

Belongs to the histone H1/H5 family.

The protein localises to the nucleus. The protein resides in the chromosome. Functionally, could act as an H1-type linker histone. The sequence is that of Histone H1 from Ascobolus immersus.